The following is a 70-amino-acid chain: Gas vesicle protein A (70 aa).

It belongs to the gas vesicle GvpA family. The gas vesicle shell is 2 nm thick and consists of a single layer of this protein. It forms helical ribs nearly perpendicular to the long axis of the vesicle.

The protein localises to the gas vesicle shell. Gas vesicles are hollow, gas filled proteinaceous nanostructures found in some microorganisms. During planktonic growth they allow positioning of the organism at a favorable depth for light or nutrient acquisition. GvpA forms the protein shell. The chain is Gas vesicle protein A from Cereibacter sphaeroides (strain ATCC 17023 / DSM 158 / JCM 6121 / CCUG 31486 / LMG 2827 / NBRC 12203 / NCIMB 8253 / ATH 2.4.1.) (Rhodobacter sphaeroides).